The chain runs to 1218 residues: ATP-dependent helicase/deoxyribonuclease subunit B (1218 aa).

The 279-residue stretch at 1–279 folds into the UvrD-like helicase ATP-binding domain; that stretch reads MRFIVGRAGT…VFLTETHRFE (279 aa). Residue 6–13 participates in ATP binding; the sequence is GRAGTGKS. The 308-residue stretch at 281–588 folds into the UvrD-like helicase C-terminal domain; that stretch reads AGLKHLERFY…LVGSLDRSRN (308 aa). Residue Cys786 participates in [4Fe-4S] cluster binding. The tract at residues 987–1006 is disordered; sequence LAEGSKGSEGSEGSEDSEDS. Residues Cys1126, Cys1129, and Cys1135 each coordinate [4Fe-4S] cluster. A compositionally biased stretch (polar residues) spans 1160 to 1169; the sequence is RVQSQDSEQY. The disordered stretch occupies residues 1160-1218; that stretch reads RVQSQDSEQYPEQHPPTSVPGETSRRALQKDGGNSPRGQELIWLGEDEAGAGKEDDGHE. Positions 1209-1218 are enriched in basic and acidic residues; that stretch reads GAGKEDDGHE.

This sequence belongs to the helicase family. AddB/RexB type 1 subfamily. Heterodimer of AddA and AddB. Requires Mg(2+) as cofactor. It depends on [4Fe-4S] cluster as a cofactor.

In terms of biological role, the heterodimer acts as both an ATP-dependent DNA helicase and an ATP-dependent, dual-direction single-stranded exonuclease. Recognizes the chi site generating a DNA molecule suitable for the initiation of homologous recombination. The AddB subunit has 5' -&gt; 3' nuclease activity but not helicase activity. In Desulfitobacterium hafniense (strain DSM 10664 / DCB-2), this protein is ATP-dependent helicase/deoxyribonuclease subunit B.